The primary structure comprises 300 residues: UDP-N-acetylenolpyruvoylglucosamine reductase (300 aa).

Residues Lys-30–Ala-194 form the FAD-binding PCMH-type domain. Residue Arg-174 is part of the active site. The active-site Proton donor is Ser-223. Residue Glu-293 is part of the active site.

Belongs to the MurB family. FAD serves as cofactor.

It localises to the cytoplasm. It carries out the reaction UDP-N-acetyl-alpha-D-muramate + NADP(+) = UDP-N-acetyl-3-O-(1-carboxyvinyl)-alpha-D-glucosamine + NADPH + H(+). It participates in cell wall biogenesis; peptidoglycan biosynthesis. In terms of biological role, cell wall formation. This chain is UDP-N-acetylenolpyruvoylglucosamine reductase, found in Geobacter metallireducens (strain ATCC 53774 / DSM 7210 / GS-15).